The following is a 394-amino-acid chain: NAD(P)H-quinone oxidoreductase subunit H (394 aa).

The protein belongs to the complex I 49 kDa subunit family. NDH-1 can be composed of about 15 different subunits; different subcomplexes with different compositions have been identified which probably have different functions.

The protein resides in the cellular thylakoid membrane. It carries out the reaction a plastoquinone + NADH + (n+1) H(+)(in) = a plastoquinol + NAD(+) + n H(+)(out). The enzyme catalyses a plastoquinone + NADPH + (n+1) H(+)(in) = a plastoquinol + NADP(+) + n H(+)(out). Its function is as follows. NDH-1 shuttles electrons from an unknown electron donor, via FMN and iron-sulfur (Fe-S) centers, to quinones in the respiratory and/or the photosynthetic chain. The immediate electron acceptor for the enzyme in this species is believed to be plastoquinone. Couples the redox reaction to proton translocation, and thus conserves the redox energy in a proton gradient. Cyanobacterial NDH-1 also plays a role in inorganic carbon-concentration. This chain is NAD(P)H-quinone oxidoreductase subunit H, found in Parasynechococcus marenigrum (strain WH8102).